The following is a 453-amino-acid chain: Homogentisate 1,2-dioxygenase (453 aa).

The Proton acceptor role is filled by histidine 304. The Fe cation site is built by histidine 347 and glutamate 353. Homogentisate contacts are provided by tyrosine 362 and histidine 383. Histidine 383 contributes to the Fe cation binding site.

The protein belongs to the homogentisate dioxygenase family. In terms of assembly, hexamer; dimer of trimers. Fe cation serves as cofactor.

It catalyses the reaction homogentisate + O2 = 4-maleylacetoacetate + H(+). It participates in amino-acid degradation; L-phenylalanine degradation; acetoacetate and fumarate from L-phenylalanine: step 4/6. In terms of biological role, involved in the catabolism of homogentisate (2,5-dihydroxyphenylacetate or 2,5-OH-PhAc), a central intermediate in the degradation of phenylalanine and tyrosine. Catalyzes the oxidative ring cleavage of the aromatic ring of homogentisate to yield maleylacetoacetate. This Sinorhizobium fredii (strain NBRC 101917 / NGR234) protein is Homogentisate 1,2-dioxygenase.